The sequence spans 77 residues: Bradykinin-potentiating peptide (77 aa).

An N-terminal signal peptide occupies residues 1-22 (MNKKTLLVIFIVTLLIADEVNS). Positions 74–77 (RRRR) are excised as a propeptide.

It belongs to the non-disulfide-bridged peptide (NDBP) superfamily. Long chain multifunctional peptide (group 2) family. In terms of tissue distribution, expressed by the venom gland.

It localises to the secreted. In terms of biological role, antimicrobial peptide. May also inhibit angiotensin-converting enzyme (ACE) and potentiate bradykinin (BK). This chain is Bradykinin-potentiating peptide, found in Tityus discrepans (Venezuelan scorpion).